Reading from the N-terminus, the 503-residue chain is Cobyric acid synthase (503 aa).

One can recognise a GATase cobBQ-type domain in the interval 255–444 (AIDVAVIRCP…MHDLFHNDAF (190 aa)). C337 functions as the Nucleophile in the catalytic mechanism. H436 is an active-site residue.

Belongs to the CobB/CobQ family. CobQ subfamily.

It participates in cofactor biosynthesis; adenosylcobalamin biosynthesis. Catalyzes amidations at positions B, D, E, and G on adenosylcobyrinic A,C-diamide. NH(2) groups are provided by glutamine, and one molecule of ATP is hydrogenolyzed for each amidation. The polypeptide is Cobyric acid synthase (Geobacillus kaustophilus (strain HTA426)).